Reading from the N-terminus, the 361-residue chain is S-adenosylmethionine decarboxylase proenzyme (361 aa).

Active-site residues include Glu8 and Glu11. Catalysis depends on Ser68, which acts as the Schiff-base intermediate with substrate; via pyruvic acid. Ser68 is modified (pyruvic acid (Ser); by autocatalysis). Cys82 functions as the Proton donor; for catalytic activity in the catalytic mechanism. Catalysis depends on proton acceptor; for processing activity residues Ser234 and His247. The interval 341-361 (SCGSPRSTLHRCWSETENEEE) is disordered.

This sequence belongs to the eukaryotic AdoMetDC family. Pyruvate is required as a cofactor. Is synthesized initially as an inactive proenzyme. Formation of the active enzyme involves a self-maturation process in which the active site pyruvoyl group is generated from an internal serine residue via an autocatalytic post-translational modification. Two non-identical subunits are generated from the proenzyme in this reaction, and the pyruvate is formed at the N-terminus of the alpha chain, which is derived from the carboxyl end of the proenzyme. The post-translation cleavage follows an unusual pathway, termed non-hydrolytic serinolysis, in which the side chain hydroxyl group of the serine supplies its oxygen atom to form the C-terminus of the beta chain, while the remainder of the serine residue undergoes an oxidative deamination to produce ammonia and the pyruvoyl group blocking the N-terminus of the alpha chain.

It carries out the reaction S-adenosyl-L-methionine + H(+) = S-adenosyl 3-(methylsulfanyl)propylamine + CO2. It functions in the pathway amine and polyamine biosynthesis; S-adenosylmethioninamine biosynthesis; S-adenosylmethioninamine from S-adenosyl-L-methionine: step 1/1. In Helianthus annuus (Common sunflower), this protein is S-adenosylmethionine decarboxylase proenzyme (SAMDC).